Consider the following 280-residue polypeptide: Uroporphyrinogen-III C-methyltransferase (280 aa).

Residues Pro24, 100 to 102, 130 to 131, Met184, Ala213, and Ala241 contribute to the S-adenosyl-L-homocysteine site; these read GGD and TA.

The protein belongs to the precorrin methyltransferase family. Homodimer.

The catalysed reaction is uroporphyrinogen III + 2 S-adenosyl-L-methionine = precorrin-2 + 2 S-adenosyl-L-homocysteine + H(+). The enzyme catalyses uroporphyrinogen III + S-adenosyl-L-methionine = precorrin-1 + S-adenosyl-L-homocysteine + H(+). It catalyses the reaction precorrin-1 + S-adenosyl-L-methionine = precorrin-2 + S-adenosyl-L-homocysteine. Its pathway is cofactor biosynthesis; adenosylcobalamin biosynthesis; precorrin-2 from uroporphyrinogen III: step 1/1. The protein operates within porphyrin-containing compound metabolism; siroheme biosynthesis; precorrin-2 from uroporphyrinogen III: step 1/1. Its activity is regulated as follows. S-adenosylhomocysteine is an extremely powerful competitive inhibitor of the uroporphyrinogen III methylation. SUMT exhibits a substrate inhibition phenomenon at uroporphyrinogen III concentrations above 2 uM; this property might play a regulatory role in cobalamin biosynthesis. The enzyme activity is completely insensitive to feedback inhibition by cobalamin and corrinoid intermediates. Catalyzes the two successive C-2 and C-7 methylation reactions involved in the conversion of uroporphyrinogen III to precorrin-2 via the intermediate formation of precorrin-1. It is a step in the biosynthesis of both cobalamin (vitamin B12) and siroheme. Neither uroporphyrin III nor the chlorin (factor I) is a substrate of SUMT. This chain is Uroporphyrinogen-III C-methyltransferase, found in Sinorhizobium sp.